The chain runs to 96 residues: Large ribosomal subunit protein uL23 (96 aa).

It belongs to the universal ribosomal protein uL23 family. As to quaternary structure, part of the 50S ribosomal subunit. Contacts protein L29, and trigger factor when it is bound to the ribosome.

Functionally, one of the early assembly proteins it binds 23S rRNA. One of the proteins that surrounds the polypeptide exit tunnel on the outside of the ribosome. Forms the main docking site for trigger factor binding to the ribosome. The protein is Large ribosomal subunit protein uL23 of Onion yellows phytoplasma (strain OY-M).